We begin with the raw amino-acid sequence, 104 residues long: Large ribosomal subunit protein uL24 (104 aa).

The protein belongs to the universal ribosomal protein uL24 family. In terms of assembly, part of the 50S ribosomal subunit.

One of two assembly initiator proteins, it binds directly to the 5'-end of the 23S rRNA, where it nucleates assembly of the 50S subunit. Functionally, one of the proteins that surrounds the polypeptide exit tunnel on the outside of the subunit. This chain is Large ribosomal subunit protein uL24, found in Azotobacter vinelandii (strain DJ / ATCC BAA-1303).